The chain runs to 190 residues: Small ribosomal subunit protein uS5 (190 aa).

Positions 22–85 (FVDKLVHINR…ESAKRNLTRV (64 aa)) constitute an S5 DRBM domain.

It belongs to the universal ribosomal protein uS5 family. As to quaternary structure, part of the 30S ribosomal subunit. Contacts proteins S4 and S8.

Its function is as follows. With S4 and S12 plays an important role in translational accuracy. Functionally, located at the back of the 30S subunit body where it stabilizes the conformation of the head with respect to the body. In Rhodopseudomonas palustris (strain BisA53), this protein is Small ribosomal subunit protein uS5.